Consider the following 302-residue polypeptide: Geranylgeranyl diphosphate synthase (302 aa).

3 residues coordinate isopentenyl diphosphate: Lys-53, Arg-56, and His-87. The Mg(2+) site is built by Asp-94 and Asp-100. Arg-105 contacts (2E,6E)-farnesyl diphosphate. Isopentenyl diphosphate is bound at residue Arg-106. The (2E,6E)-farnesyl diphosphate site is built by Lys-189, Thr-190, and Gln-227.

This sequence belongs to the FPP/GGPP synthase family. Mg(2+) is required as a cofactor.

It carries out the reaction isopentenyl diphosphate + (2E,6E)-farnesyl diphosphate = (2E,6E,10E)-geranylgeranyl diphosphate + diphosphate. It functions in the pathway isoprenoid biosynthesis; geranylgeranyl diphosphate biosynthesis; geranylgeranyl diphosphate from farnesyl diphosphate and isopentenyl diphosphate: step 1/1. Functionally, catalyzes the condensation of farnesyl diphosphate (FPP) and isopentenyl diphosphate (IPP) to yield geranylgeranyl diphosphate (GGPP) needed for biosynthesis of carotenoids and diterpenes. The chain is Geranylgeranyl diphosphate synthase (crtE) from Pantoea ananas (Erwinia uredovora).